The primary structure comprises 631 residues: Phosphomethylpyrimidine synthase (631 aa).

Substrate contacts are provided by residues Asn239, Met268, Tyr297, His333, 353–355, 394–397, and Glu433; these read SRG and DGLR. A Zn(2+)-binding site is contributed by His437. Tyr460 lines the substrate pocket. His501 serves as a coordination point for Zn(2+). [4Fe-4S] cluster-binding residues include Cys581, Cys584, and Cys589.

The protein belongs to the ThiC family. As to quaternary structure, homodimer. Requires [4Fe-4S] cluster as cofactor.

It carries out the reaction 5-amino-1-(5-phospho-beta-D-ribosyl)imidazole + S-adenosyl-L-methionine = 4-amino-2-methyl-5-(phosphooxymethyl)pyrimidine + CO + 5'-deoxyadenosine + formate + L-methionine + 3 H(+). It participates in cofactor biosynthesis; thiamine diphosphate biosynthesis. Catalyzes the synthesis of the hydroxymethylpyrimidine phosphate (HMP-P) moiety of thiamine from aminoimidazole ribotide (AIR) in a radical S-adenosyl-L-methionine (SAM)-dependent reaction. The chain is Phosphomethylpyrimidine synthase from Shigella dysenteriae serotype 1 (strain Sd197).